A 395-amino-acid polypeptide reads, in one-letter code: Phosphoribulokinase, chloroplastic (395 aa).

A chloroplast-targeting transit peptide spans 1–46; the sequence is MAVSTIYSTQALNSTHFLTSSSSSKQVFLYRRQPQTNRRFNTLITC. Residues Cys-61 and Cys-100 are joined by a disulfide bond.

Belongs to the phosphoribulokinase family.

It is found in the plastid. It localises to the chloroplast. The enzyme catalyses D-ribulose 5-phosphate + ATP = D-ribulose 1,5-bisphosphate + ADP + H(+). It participates in carbohydrate biosynthesis; Calvin cycle. With respect to regulation, light regulated via thioredoxin by reversible oxidation/reduction of sulfhydryl/disulfide groups. The chain is Phosphoribulokinase, chloroplastic from Arabidopsis thaliana (Mouse-ear cress).